The primary structure comprises 350 residues: Variable large protein 4 (350 aa).

A signal peptide spans 1 to 18 (MRRRISAIIMTLFMVLVS). The N-palmitoyl cysteine moiety is linked to residue Cys-19. Cys-19 carries S-diacylglycerol cysteine lipidation.

Belongs to the variable large protein (Vlp) family. Delta subfamily.

It is found in the cell outer membrane. In terms of biological role, the Vlp and Vsp proteins are antigenically distinct proteins, only one vlp or vsp gene is transcriptionally active at any one time. Switching between these genes is a mechanism of host immune response evasion. The chain is Variable large protein 4 from Borrelia hermsii.